Here is a 684-residue protein sequence, read N- to C-terminus: Translation factor GUF1 homolog, mitochondrial (684 aa).

In terms of domain architecture, tr-type G spans 82 to 270; it reads HLIRNFSIIA…AVIERIPQPK (189 aa). GTP is bound by residues 91–98, 163–167, and 217–220; these read AHVDHGKS, DTPGH, and NKID.

The protein belongs to the TRAFAC class translation factor GTPase superfamily. Classic translation factor GTPase family. LepA subfamily.

Its subcellular location is the mitochondrion inner membrane. It catalyses the reaction GTP + H2O = GDP + phosphate + H(+). Its function is as follows. Promotes mitochondrial protein synthesis. May act as a fidelity factor of the translation reaction, by catalyzing a one-codon backward translocation of tRNAs on improperly translocated ribosomes. Binds to mitochondrial ribosomes in a GTP-dependent manner. The polypeptide is Translation factor GUF1 homolog, mitochondrial (Physcomitrium patens (Spreading-leaved earth moss)).